Reading from the N-terminus, the 295-residue chain is Beta-chimaerin (295 aa).

Residues 41-91 form a Phorbol-ester/DAG-type zinc finger; sequence THNFKVHTFRGPHWCEYCANFMWGLIAQGVRCSDCGLNVHKQCSKHVPNDC. One can recognise a Rho-GAP domain in the interval 104–295; it reads CDLTTLVKAH…ILIENEDVLF (192 aa).

In terms of tissue distribution, found in cerebellum and testis.

It is found in the membrane. Its activity is regulated as follows. In the inactive state, the N terminus protrudes into the active site of the Rho-GAP domain, sterically blocking Rac binding. Phospholipid binding to the Phorbol-ester/DAG-type zinc-finger/C1 domain triggers the cooperative dissociation of these interactions, allowing the N-terminus to move out of the active site and thereby activating the enzyme. GTPase-activating protein for p21-rac. The sequence is that of Beta-chimaerin (Chn2) from Rattus norvegicus (Rat).